We begin with the raw amino-acid sequence, 225 residues long: 7-cyano-7-deazaguanine synthase (225 aa).

Val-8–Leu-18 lines the ATP pocket. Residues Cys-188, Cys-198, Cys-201, and Cys-204 each contribute to the Zn(2+) site.

Belongs to the QueC family. Requires Zn(2+) as cofactor.

It carries out the reaction 7-carboxy-7-deazaguanine + NH4(+) + ATP = 7-cyano-7-deazaguanine + ADP + phosphate + H2O + H(+). Its pathway is purine metabolism; 7-cyano-7-deazaguanine biosynthesis. Functionally, catalyzes the ATP-dependent conversion of 7-carboxy-7-deazaguanine (CDG) to 7-cyano-7-deazaguanine (preQ(0)). This is 7-cyano-7-deazaguanine synthase from Rickettsia bellii (strain OSU 85-389).